The sequence spans 332 residues: ATP-dependent (S)-NAD(P)H-hydrate dehydratase (332 aa).

The YjeF C-terminal domain maps to 46 to 326; it reads LLERARNIVP…EQIHNVFDDI (281 aa). (6S)-NADPHX-binding positions include Gly-146 and 199-205; that span reads NAIEFCR. ATP contacts are provided by residues 230–234 and 251–260; these read KGLND and GSGRRCGGQG. Asp-261 contacts (6S)-NADPHX.

Belongs to the NnrD/CARKD family. The cofactor is Mg(2+).

It carries out the reaction (6S)-NADHX + ATP = ADP + phosphate + NADH + H(+). It catalyses the reaction (6S)-NADPHX + ATP = ADP + phosphate + NADPH + H(+). In terms of biological role, catalyzes the dehydration of the S-form of NAD(P)HX at the expense of ATP, which is converted to ADP. Together with NAD(P)HX epimerase, which catalyzes the epimerization of the S- and R-forms, the enzyme allows the repair of both epimers of NAD(P)HX, a damaged form of NAD(P)H that is a result of enzymatic or heat-dependent hydration. In Aedes aegypti (Yellowfever mosquito), this protein is ATP-dependent (S)-NAD(P)H-hydrate dehydratase.